A 493-amino-acid polypeptide reads, in one-letter code: Amphoterin-induced protein 1 (493 aa).

The signal sequence occupies residues 1-27 (MHPHRDPRGLWLLLPSLSLLLFEVARA). An LRRNT domain is found at 28–61 (GRAVVSCPAACLCASNILSCSKQQLPNVPHSLPS). Over 28–372 (GRAVVSCPAA…LHGHHDTLNT (345 aa)) the chain is Extracellular. Intrachain disulfides connect Cys-34-Cys-40 and Cys-38-Cys-47. 6 LRR repeats span residues 62-83 (YTAL…WTPT), 87-108 (QLHS…AFSP), 111-132 (NLRY…LFSD), 135-156 (VLEV…AFDD), 159-179 (QLQK…ELVK), and 186-206 (KLTL…PDLQ). Asn-72 is a glycosylation site (N-linked (GlcNAc...) asparagine). Residues 221–272 (NPLNCDCELYQLFSHWQYRQLSSVMDFQEDLYCMNSKKLHNVFNLSFLNCGE) form the LRRCT domain. Intrachain disulfides connect Cys-225–Cys-253, Cys-227–Cys-270, and Cys-290–Cys-341. Asn-264, Asn-315, Asn-349, and Asn-360 each carry an N-linked (GlcNAc...) asparagine glycan. Residues 269–353 (NCGEYKERAW…MGETFNETLS (85 aa)) enclose the Ig-like C2-type domain. The chain crosses the membrane as a helical span at residues 373-393 (AYTTLVGCILSVVLVLIYLYL). The Cytoplasmic segment spans residues 394–493 (TPCRCWCRGV…SVFSDTPIVV (100 aa)). The tract at residues 405–493 (KPSSHQGDSL…SVFSDTPIVV (89 aa)) is disordered. The segment covering 408–424 (SHQGDSLSSSMLSTTPN) has biased composition (polar residues). Basic and acidic residues predominate over residues 431-442 (GDKDDGFDRRVA). Residues Ser-477 and Ser-481 each carry the phosphoserine modification.

This sequence belongs to the immunoglobulin superfamily. AMIGO family. In terms of assembly, homodimer, and heterodimer with AMIGO2 and AMIGO3. Interacts with KCNB1.

It localises to the cell membrane. The protein resides in the perikaryon. It is found in the cell projection. The protein localises to the dendrite. Its subcellular location is the axon. Promotes growth and fasciculation of neurites from cultured hippocampal neurons. May be involved in fasciculation as well as myelination of developing neural axons. May have a role in regeneration as well as neural plasticity in the adult nervous system. May mediate homophilic as well as heterophilic cell-cell interaction and contribute to signal transduction through its intracellular domain. Assembled with KCNB1 modulates the gating characteristics of the delayed rectifier voltage-dependent potassium channel KCNB1. The polypeptide is Amphoterin-induced protein 1 (Homo sapiens (Human)).